A 276-amino-acid polypeptide reads, in one-letter code: L-aminoadipate-semialdehyde dehydrogenase-phosphopantetheinyl transferase (276 aa).

This sequence belongs to the P-Pant transferase superfamily. AcpS family.

The catalysed reaction is apo-[ACP] + CoA = holo-[ACP] + adenosine 3',5'-bisphosphate + H(+). Its function is as follows. Catalyzes the transfer of a 4'-phosphopantetheine moiety from coenzyme A to a serine residue of acceptor proteins, such as alpha-aminoadipate reductase. Necessary for alpha-aminoadipate reductase activity. The polypeptide is L-aminoadipate-semialdehyde dehydrogenase-phosphopantetheinyl transferase (LYS5) (Eremothecium gossypii (strain ATCC 10895 / CBS 109.51 / FGSC 9923 / NRRL Y-1056) (Yeast)).